The following is a 221-amino-acid chain: 7-cyano-7-deazaguanine synthase (221 aa).

7–17 (LSGGLDSAVSL) contributes to the ATP binding site. Zn(2+) contacts are provided by Cys-192, Cys-200, Cys-203, and Cys-206.

This sequence belongs to the QueC family. As to quaternary structure, homodimer. Requires Zn(2+) as cofactor.

It catalyses the reaction 7-carboxy-7-deazaguanine + NH4(+) + ATP = 7-cyano-7-deazaguanine + ADP + phosphate + H2O + H(+). Its pathway is purine metabolism; 7-cyano-7-deazaguanine biosynthesis. Its function is as follows. Catalyzes the ATP-dependent conversion of 7-carboxy-7-deazaguanine (CDG) to 7-cyano-7-deazaguanine (preQ(0)). The polypeptide is 7-cyano-7-deazaguanine synthase (Pelotomaculum thermopropionicum (strain DSM 13744 / JCM 10971 / SI)).